The primary structure comprises 1002 residues: SIT4-associating protein SAP155 (1002 aa).

Disordered regions lie at residues 51-131, 214-273, 609-645, 868-901, and 940-1002; these read GTSD…APMM, QQQL…ANED, EQLK…ESDY, DNTT…GGGQ, and NTEN…YDHE. Position 58 is a phosphoserine (Ser58). The segment covering 62 to 97 has biased composition (basic and acidic residues); it reads EYSHGDEVKTARGDQKSRFEKDDQQERYEKEEEERS. Residues 98 to 114 show a composition bias toward low complexity; the sequence is MNSSESSTTSFSSGSTS. Residues 220–241 show a composition bias toward acidic residues; it reads SSQEDVYVESDTEQEEEKEDDN. Phosphoserine is present on Ser255. The segment covering 262–273 has biased composition (acidic residues); it reads NNNDDDDDANED. The span at 609–626 shows a compositional bias: basic and acidic residues; that stretch reads EQLKTKHSPTRDTDHDLK. Phosphothreonine occurs at positions 613 and 618. The segment covering 635-645 has biased composition (acidic residues); sequence DNNDNDDESDY. Polar residues predominate over residues 868-885; the sequence is DNTTVLTPNGDASNNNEI. Over residues 956–976 the composition is skewed to low complexity; it reads SNSNINNTNHNSNNSNNNDNN. Acidic residues predominate over residues 991 to 1002; sequence EDADNDNDYDHE.

Belongs to the SAPS family. Associates with the SIT4 protein phosphatase catalytic subunit in a cell-cycle-dependent manner. Hyperphosphorylated in the absence of SIT4.

It is found in the cytoplasm. Its function is as follows. Positive regulator of protein phosphatase SIT4. Involved in directing expression of TOR-repressed genes and in dephosphorylation of NPR1 in response to nutrient starvation. Negatively modulates K(+) efflux of the cell by the Na(+)-K(+)/H(+) antiporter NHA1. The sequence is that of SIT4-associating protein SAP155 (SAP155) from Saccharomyces cerevisiae (strain ATCC 204508 / S288c) (Baker's yeast).